A 118-amino-acid polypeptide reads, in one-letter code: Large ribosomal subunit protein uL18 (118 aa).

Belongs to the universal ribosomal protein uL18 family. Part of the 50S ribosomal subunit; part of the 5S rRNA/L5/L18/L25 subcomplex. Contacts the 5S and 23S rRNAs.

Functionally, this is one of the proteins that bind and probably mediate the attachment of the 5S RNA into the large ribosomal subunit, where it forms part of the central protuberance. The sequence is that of Large ribosomal subunit protein uL18 from Ligilactobacillus salivarius (strain UCC118) (Lactobacillus salivarius).